The following is a 336-amino-acid chain: Phospho-N-acetylmuramoyl-pentapeptide-transferase (336 aa).

10 helical membrane-spanning segments follow: residues 3–23 (LTLI…PYFI), 53–73 (GGTV…LFSI), 78–98 (SLAL…IGFL), 118–138 (LALQ…PSGI), 143–163 (VFGY…FWVV), 174–194 (GIDG…GVIA), 200–220 (FDVL…FLFN), 226–246 (VFMG…ISIA), 251–271 (WTLL…MLQV), and 316–336 (AFLW…LYVF).

The protein belongs to the glycosyltransferase 4 family. MraY subfamily. Mg(2+) is required as a cofactor.

Its subcellular location is the cell membrane. It carries out the reaction UDP-N-acetyl-alpha-D-muramoyl-L-alanyl-gamma-D-glutamyl-L-lysyl-D-alanyl-D-alanine + di-trans,octa-cis-undecaprenyl phosphate = Mur2Ac(oyl-L-Ala-gamma-D-Glu-L-Lys-D-Ala-D-Ala)-di-trans,octa-cis-undecaprenyl diphosphate + UMP. The protein operates within cell wall biogenesis; peptidoglycan biosynthesis. In terms of biological role, catalyzes the initial step of the lipid cycle reactions in the biosynthesis of the cell wall peptidoglycan: transfers peptidoglycan precursor phospho-MurNAc-pentapeptide from UDP-MurNAc-pentapeptide onto the lipid carrier undecaprenyl phosphate, yielding undecaprenyl-pyrophosphoryl-MurNAc-pentapeptide, known as lipid I. The sequence is that of Phospho-N-acetylmuramoyl-pentapeptide-transferase from Streptococcus pyogenes serotype M6 (strain ATCC BAA-946 / MGAS10394).